We begin with the raw amino-acid sequence, 390 residues long: Pre-mycofactocin synthase (390 aa).

One can recognise an FMN hydroxy acid dehydrogenase domain in the interval 1–383 (MADEWFETVA…RSDDILIPAD (383 aa)). 4 residues coordinate FMN: serine 108, glutamine 128, threonine 156, and lysine 254. The active-site Proton acceptor is the histidine 278. FMN-binding positions include 309–313 (DGGIR) and 332–333 (GR).

This sequence belongs to the FMN-dependent alpha-hydroxy acid dehydrogenase family. It depends on FMN as a cofactor.

The enzyme catalyses 3-amino-5-[(4-hydroxyphenyl)methyl]-4,4-dimethyl-2-pyrrolidin-2-one + O2 + H2O = pre-mycofactocin + H2O2 + NH4(+). In terms of biological role, involved in the biosynthesis of the enzyme cofactor mycofactocin (MFT). Catalyzes the oxidative deamination of AHDP (3-amino-5-[(4-hydroxyphenyl)methyl]-4,4-dimethyl-2-pyrrolidin-2-one), forming an alpha-keto amide moiety on the resulting molecule, which is called pre-mycofactocin (PMFT). This reaction occurs via a 5-[(4-hydroxyphenyl)methyl]-3-imino-4,4-dimethylpyrrolidin-2-one intermediate, which converts to PMFT. The alpha-keto amide moiety is the redox-active center for the redox activity of mycofactocin. This is Pre-mycofactocin synthase from Mycobacterium ulcerans (strain Agy99).